We begin with the raw amino-acid sequence, 396 residues long: 1-deoxy-D-xylulose 5-phosphate reductoisomerase (396 aa).

Thr-15, Gly-16, Ile-18, and Asn-127 together coordinate NADPH. Residue Lys-128 participates in 1-deoxy-D-xylulose 5-phosphate binding. Glu-129 is an NADPH binding site. A Mn(2+)-binding site is contributed by Asp-153. 1-deoxy-D-xylulose 5-phosphate is bound by residues Ser-154, Glu-155, Ser-177, and His-200. Glu-155 is a Mn(2+) binding site. Gly-206 lines the NADPH pocket. Residues Ser-213, Asn-218, Lys-219, and Glu-222 each coordinate 1-deoxy-D-xylulose 5-phosphate. Glu-222 lines the Mn(2+) pocket.

Belongs to the DXR family. Mg(2+) is required as a cofactor. Requires Mn(2+) as cofactor.

The catalysed reaction is 2-C-methyl-D-erythritol 4-phosphate + NADP(+) = 1-deoxy-D-xylulose 5-phosphate + NADPH + H(+). Its pathway is isoprenoid biosynthesis; isopentenyl diphosphate biosynthesis via DXP pathway; isopentenyl diphosphate from 1-deoxy-D-xylulose 5-phosphate: step 1/6. Its function is as follows. Catalyzes the NADPH-dependent rearrangement and reduction of 1-deoxy-D-xylulose-5-phosphate (DXP) to 2-C-methyl-D-erythritol 4-phosphate (MEP). This Anaplasma marginale (strain Florida) protein is 1-deoxy-D-xylulose 5-phosphate reductoisomerase.